Here is a 112-residue protein sequence, read N- to C-terminus: cAMP-regulated phosphoprotein 19 (112 aa).

An N-acetylmethionine modification is found at methionine 1. Residues 1-11 show a composition bias toward low complexity; the sequence is MSAEVPEAASA. Residues 1 to 49 are disordered; sequence MSAEVPEAASAEEQKEMEDKVTSPEKAEEAKLKARYPHLGQKPGGSDFL. N-acetylserine is present on serine 2. Serine 2 and serine 23 each carry phosphoserine. The segment covering 12-32 has biased composition (basic and acidic residues); the sequence is EEQKEMEDKVTSPEKAEEAKL. 2 positions are modified to phosphoserine; by GWL: serine 62 and serine 104. The segment at 74-112 is disordered; sequence NKQLPAAAPDKTEVTGDHIPTPQDLPQRKPSLVASKLAG. Serine 104 is subject to Phosphoserine; by PKA. Residue lysine 109 is modified to N6-acetyllysine.

It belongs to the endosulfine family. As to quaternary structure, interacts (when phosphorylated at Ser-62) with PPP2R2D. Interacts with SNCA. Interacts with PPP2R2A; the interaction is direct and this interaction inhibits PP2A activity. Phosphorylation at Ser-62 by MASTL/GWL during mitosis is essential for interaction with PPP2R2D (PR55-delta) and subsequent inactivation of PP2A. Phosphorylated by PKA.

The protein localises to the cytoplasm. Its function is as follows. Protein phosphatase inhibitor that specifically inhibits protein phosphatase 2A (PP2A) during mitosis. Inhibition of PP2A is enhanced when ARPP19 is phosphorylated. When phosphorylated at Ser-62 during mitosis, specifically interacts with PPP2R2D (PR55-delta) and inhibits its activity, leading to inactivation of PP2A, an essential condition to keep cyclin-B1-CDK1 activity high during M phase. May indirectly enhance GAP-43 expression by binding to the NGF-regulatory region of its mRNA. The polypeptide is cAMP-regulated phosphoprotein 19 (Arpp19) (Mus musculus (Mouse)).